The primary structure comprises 465 residues: MIGAGLAGSEAAWQLAEAGVDVVLHEMRPDRMTEAHRTATPAELVCSNSFRSDDAANNAVGLLHAEMRRLGSLIMRAADANQVPAGGALAVDREGFSAAVATALNGHPRIELRRGEITGLPPSDWDNVIIATGPLTSQPLAEAIRDLTDETALAFFDAIAPIVHRDTIDMSKAWFQSRYDKVGPGGTGADYINCPMTKDQYDTFVAALLAGEKTDFKDWETNTPYFDGCLPIEVMAERGHETLRHGPMKPVGLTNPHNPTVKPHAIVQLRQDNKLGTLYNMVGFQTKLKYGPQQQIFRTIPGLENAEFARLGGLHRNTFLNSPKLLDAQLRLRAQPRLRFAGQMTGCEGYVESASIGLIAGLYAAAEARGTGLSPPPATTALGALLGHITGGHIETIDGATRSFQPMNINFGLFPPLAVAPTRKPDGSRLKGNEKTVAKKQALSARALADLDGWIAEHLRVAAAA.

An FAD-binding site is contributed by 3–8; it reads GAGLAG.

The protein belongs to the MnmG family. TrmFO subfamily. FAD serves as cofactor.

The protein localises to the cytoplasm. It carries out the reaction uridine(54) in tRNA + (6R)-5,10-methylene-5,6,7,8-tetrahydrofolate + NADH + H(+) = 5-methyluridine(54) in tRNA + (6S)-5,6,7,8-tetrahydrofolate + NAD(+). The catalysed reaction is uridine(54) in tRNA + (6R)-5,10-methylene-5,6,7,8-tetrahydrofolate + NADPH + H(+) = 5-methyluridine(54) in tRNA + (6S)-5,6,7,8-tetrahydrofolate + NADP(+). Its function is as follows. Catalyzes the folate-dependent formation of 5-methyl-uridine at position 54 (M-5-U54) in all tRNAs. This is Methylenetetrahydrofolate--tRNA-(uracil-5-)-methyltransferase TrmFO from Bradyrhizobium sp. (strain BTAi1 / ATCC BAA-1182).